The chain runs to 395 residues: Chaperone protein DnaJ 1 (395 aa).

The J domain maps to 10-75 (DFYQELGVSS…AKRKEYDETR (66 aa)). The segment at 164–242 (GVAMPLRLTS…CKGTGVTTRT (79 aa)) adopts a CR-type zinc-finger fold. Zn(2+) is bound by residues Cys177, Cys180, Cys194, Cys197, Cys216, Cys219, Cys230, and Cys233. CXXCXGXG motif repeat units lie at residues 177–184 (CTNCHGSG), 194–201 (CPTCNGSG), 216–223 (CTDCRGSG), and 230–237 (CEECKGTG).

Belongs to the DnaJ family. In terms of assembly, homodimer. The cofactor is Zn(2+).

The protein resides in the cytoplasm. Participates actively in the response to hyperosmotic and heat shock by preventing the aggregation of stress-denatured proteins and by disaggregating proteins, also in an autonomous, DnaK-independent fashion. Unfolded proteins bind initially to DnaJ; upon interaction with the DnaJ-bound protein, DnaK hydrolyzes its bound ATP, resulting in the formation of a stable complex. GrpE releases ADP from DnaK; ATP binding to DnaK triggers the release of the substrate protein, thus completing the reaction cycle. Several rounds of ATP-dependent interactions between DnaJ, DnaK and GrpE are required for fully efficient folding. Also involved, together with DnaK and GrpE, in the DNA replication of plasmids through activation of initiation proteins. In Mycobacterium bovis (strain ATCC BAA-935 / AF2122/97), this protein is Chaperone protein DnaJ 1.